The primary structure comprises 360 residues: Popeye domain-containing protein 1 (360 aa).

Topologically, residues 1–48 are extracellular; the sequence is MNYTESSPLRESTAIGFTPELESIIPVPSNKTTCENWREIHHLVFHVA. 2 N-linked (GlcNAc...) asparagine glycosylation sites follow: Asn-2 and Asn-30. The chain crosses the membrane as a helical span at residues 49–69; the sequence is NICFAVGLVIPTTLHLHMIFL. A topological domain (cytoplasmic) is located at residue Arg-70. A helical transmembrane segment spans residues 71-91; sequence GMLTLGCTLYIVWATLYRCAL. Residue Asp-92 is a topological domain, extracellular. A helical transmembrane segment spans residues 93 to 113; that stretch reads IMIWNSVFLGVNILHLSYLLY. Positions 93–115 are required for interaction with CAV3; sequence IMIWNSVFLGVNILHLSYLLYKK. The Cytoplasmic segment spans residues 114–360; the sequence is KKRPVKIEKE…PNTLKVHQLP (247 aa). The tract at residues 136–186 is required for interaction with KCNK2; the sequence is RVPPDLFRRLTGQFCMIQTLKKGQTYAAEDKTSVDDRLSILLKGKMKVSYR. Phosphoserine is present on residues Ser-295 and Ser-318. The tract at residues 317–360 is disordered; it reads SSLHVSSPHQRASAKMKPIEEGAEDDDDVFEPASPNTLKVHQLP. Positions 337-346 are enriched in acidic residues; the sequence is EGAEDDDDVF. Residues 350 to 360 are compositionally biased toward polar residues; it reads SPNTLKVHQLP.

It belongs to the popeye family. Homodimer. Homodimerization requires the C-terminus cytoplasmic region. Interacts (via the C-terminus cytoplasmic tail) with TJP1. Interacts (via the C-terminus cytoplasmic tail) with ARHGEF25/GEFT (via the DH domain). Interacts (via the C-terminus cytoplasmic tail) with VAMP3. Interacts with KCNK2; the interaction enhances KCNK2 surface expression and is inhibited by cAMP. Interacts with CAV3. Expressed in epithelial cells (at protein level). Expressed in fetal and adult heart and skeletal muscle.

The protein localises to the lateral cell membrane. It is found in the cell junction. The protein resides in the tight junction. It localises to the membrane. Its subcellular location is the cell membrane. The protein localises to the sarcolemma. It is found in the caveola. In terms of biological role, cell adhesion molecule involved in the establishment and/or maintenance of cell integrity. Involved in the formation and regulation of the tight junction (TJ) paracellular permeability barrier in epithelial cells. Plays a role in VAMP3-mediated vesicular transport and recycling of different receptor molecules through its interaction with VAMP3. Plays a role in the regulation of cell shape and movement by modulating the Rho-family GTPase activity through its interaction with ARHGEF25/GEFT. Induces primordial adhesive contact and aggregation of epithelial cells in a Ca(2+)-independent manner. Also involved in striated muscle regeneration and repair and in the regulation of cell spreading. Important for the maintenance of cardiac function. Plays a regulatory function in heart rate dynamics mediated, at least in part, through cAMP-binding and, probably, by increasing cell surface expression of the potassium channel KCNK2 and enhancing current density. Is also a caveolae-associated protein important for the preservation of caveolae structural and functional integrity as well as for heart protection against ischemia injury. The protein is Popeye domain-containing protein 1 of Homo sapiens (Human).